A 272-amino-acid polypeptide reads, in one-letter code: 4-hydroxy-tetrahydrodipicolinate reductase (272 aa).

NAD(+)-binding positions include 11-16 and E37; that span reads GVSGRM. R38 is an NADP(+) binding site. Residues 101 to 103 and 125 to 128 each bind NAD(+); these read GTT and AGNM. The Proton donor/acceptor role is filled by H158. Residue H159 coordinates (S)-2,3,4,5-tetrahydrodipicolinate. K162 functions as the Proton donor in the catalytic mechanism. Residue 168 to 169 participates in (S)-2,3,4,5-tetrahydrodipicolinate binding; the sequence is GT.

The protein belongs to the DapB family.

It is found in the cytoplasm. It carries out the reaction (S)-2,3,4,5-tetrahydrodipicolinate + NAD(+) + H2O = (2S,4S)-4-hydroxy-2,3,4,5-tetrahydrodipicolinate + NADH + H(+). The catalysed reaction is (S)-2,3,4,5-tetrahydrodipicolinate + NADP(+) + H2O = (2S,4S)-4-hydroxy-2,3,4,5-tetrahydrodipicolinate + NADPH + H(+). It participates in amino-acid biosynthesis; L-lysine biosynthesis via DAP pathway; (S)-tetrahydrodipicolinate from L-aspartate: step 4/4. Catalyzes the conversion of 4-hydroxy-tetrahydrodipicolinate (HTPA) to tetrahydrodipicolinate. The chain is 4-hydroxy-tetrahydrodipicolinate reductase from Roseobacter denitrificans (strain ATCC 33942 / OCh 114) (Erythrobacter sp. (strain OCh 114)).